The sequence spans 197 residues: Small ribosomal subunit protein eS1 (197 aa).

It belongs to the eukaryotic ribosomal protein eS1 family.

The protein is Small ribosomal subunit protein eS1 of Sulfolobus acidocaldarius (strain ATCC 33909 / DSM 639 / JCM 8929 / NBRC 15157 / NCIMB 11770).